The sequence spans 218 residues: Nonsense-mediated decay protein 4 (218 aa).

It is found in the cytoplasm. Involved in nonsense-mediated decay of mRNAs containing premature stop codons. This Saccharomyces cerevisiae (strain ATCC 204508 / S288c) (Baker's yeast) protein is Nonsense-mediated decay protein 4 (NMD4).